The chain runs to 457 residues: Fibrinogen C domain-containing protein 1-B (457 aa).

The disordered stretch occupies residues 1–21; the sequence is MGSDRWKNIRGTPQMEDSVQE. The Cytoplasmic portion of the chain corresponds to 1–33; sequence MGSDRWKNIRGTPQMEDSVQEKSQRKGCGYILC. The chain crosses the membrane as a helical; Signal-anchor for type II membrane protein span at residues 34–54; sequence TVLLSVAVLLAVTVTGAVLFM. Residues 55–457 lie on the Extracellular side of the membrane; the sequence is NQYHAPSTEP…MKIRPQREEN (403 aa). A Fibrinogen C-terminal domain is found at 231–454; sequence CANGSKPRDC…FTEMKIRPQR (224 aa). Asn-233 is a glycosylation site (N-linked (GlcNAc...) asparagine). A disulfide bridge connects residues Cys-240 and Cys-269. An N-linked (GlcNAc...) asparagine glycan is attached at Asn-336. Ca(2+) is bound by residues Asp-389 and Asp-391. Residues Cys-397 and Cys-410 are joined by a disulfide bond.

As to quaternary structure, homotetramer; disulfide-linked.

It is found in the membrane. In terms of biological role, acetyl group-binding receptor which shows a calcium-dependent binding to acetylated structures such as chitin, some N-acetylated carbohydrates, and amino acids. In Xenopus laevis (African clawed frog), this protein is Fibrinogen C domain-containing protein 1-B (fibcd1-b).